The following is a 404-amino-acid chain: Propionate kinase (404 aa).

This sequence belongs to the acetokinase family. PduW subfamily.

It is found in the cytoplasm. It catalyses the reaction propanoate + ATP = propanoyl phosphate + ADP. It functions in the pathway polyol metabolism; 1,2-propanediol degradation. In terms of biological role, works with phosphate acetyltransferase (pta) to capture exogenous propionate and regenerate propionyl-CoA during degradation of 1,2-propanediol (1,2-PD). Expression of a cosmid containing the full 21-gene pdu operon in E.coli allows E.coli to grow on 1,2-propanediol (1,2-PD) with the appearance of bacterial microcompartments (BMC) in its cytoplasm. The protein is Propionate kinase of Citrobacter freundii.